A 466-amino-acid chain; its full sequence is 3-isopropylmalate dehydratase large subunit (466 aa).

Residues C347, C407, and C410 each contribute to the [4Fe-4S] cluster site.

It belongs to the aconitase/IPM isomerase family. LeuC type 1 subfamily. As to quaternary structure, heterodimer of LeuC and LeuD. [4Fe-4S] cluster is required as a cofactor.

The catalysed reaction is (2R,3S)-3-isopropylmalate = (2S)-2-isopropylmalate. It participates in amino-acid biosynthesis; L-leucine biosynthesis; L-leucine from 3-methyl-2-oxobutanoate: step 2/4. Catalyzes the isomerization between 2-isopropylmalate and 3-isopropylmalate, via the formation of 2-isopropylmaleate. In Escherichia coli O139:H28 (strain E24377A / ETEC), this protein is 3-isopropylmalate dehydratase large subunit.